The primary structure comprises 1511 residues: MPEAKLNNNVNDVTSYSSASSSTENAADLHNYNGFDEHTEARIQKLARTLTAQSMQNSTQSAPNKSDAQSIFSSGVEGVNPIFSDPEAPGYDPKLDPNSENFSSAAWVKNMAHLSAADPDFYKPYSLGCAWKNLSASGASADVAYQSTVVNIPYKILKSGLRKFQRSKETNTFQILKPMDGCLNPGELLVVLGRPGSGCTTLLKSISSNTHGFDLGADTKISYSGYSGDDIKKHFRGEVVYNAEADVHLPHLTVFETLVTVARLKTPQNRIKGVDRESYANHLAEVAMATYGLSHTRNTKVGNDIVRGVSGGERKRVSIAEVSICGSKFQCWDNATRGLDSATALEFIRALKTQADISNTSATVAIYQCSQDAYDLFNKVCVLDDGYQIYYGPADKAKKYFEDMGYVCPSRQTTADFLTSVTSPSERTLNKDMLKKGIHIPQTPKEMNDYWVKSPNYKELMKEVDQRLLNDDEASREAIKEAHIAKQSKRARPSSPYTVSYMMQVKYLLIRNMWRLRNNIGFTLFMILGNCSMALILGSMFFKIMKKGDTSTFYFRGSAMFFAILFNAFSSLLEIFSLYEARPITEKHRTYSLYHPSADAFASVLSEIPSKLIIAVCFNIIFYFLVDFRRNGGVFFFYLLINIVAVFSMSHLFRCVGSLTKTLSEAMVPASMLLLALSMYTGFAIPKKKILRWSKWIWYINPLAYLFESLLINEFHGIKFPCAEYVPRGPAYANISSTESVCTVVGAVPGQDYVLGDDFIRGTYQYYHKDKWRGFGIGMAYVVFFFFVYLFLCEYNEGAKQKGEILVFPRSIVKRMKKRGVLTEKNANDPENVGERSDLSSDRKMLQESSEEESDTYGEIGLSKSEAIFHWRNLCYEVQIKAETRRILNNVDGWVKPGTLTALMGASGAGKTTLLDCLAERVTMGVITGDILVNGIPRDKSFPRSIGYCQQQDLHLKTATVRESLRFSAYLRQPAEVSIEEKNRYVEEVIKILEMEKYADAVVGVAGEGLNVEQRKRLTIGVELTAKPKLLVFLDEPTSGLDSQTAWSICQLMKKLANHGQAILCTIHQPSAILMQEFDRLLFMQRGGKTVYFGDLGEGCKTMIDYFESHGAHKCPADANPAEWMLEVVGAAPGSHANQDYYEVWRNSEEYRAVQSELDWMERELPKKGSITAAEDKHEFSQSIIYQTKLVSIRLFQQYWRSPDYLWSKFILTIFNQLFIGFTFFKAGTSLQGLQNQMLAVFMFTVIFNPILQQYLPSFVQQRDLYEARERPSRTFSWISFIFAQIFVEVPWNILAGTIAYFIYYYPIGFYSNASAAGQLHERGALFWLFSCAFYVYVGSMGLLVISFNQVAESAANLASLLFTMSLSFCGVMTTPSAMPRFWIFMYRVSPLTYFIQALLAVGVANVDVKCADYELLEFTPPSGMTCGQYMEPYLQLAKTGYLTDENATDTCSFCQISTTNDYLANVNSFYSERWRNYGIFICYIAFNYIAGVFFYWLARVPKKNGKLSKK.

Positions 1–14 are enriched in polar residues; that stretch reads MPEAKLNNNVNDVT. A disordered region spans residues 1–32; the sequence is MPEAKLNNNVNDVTSYSSASSSTENAADLHNY. Topologically, residues 1 to 517 are cytoplasmic; sequence MPEAKLNNNV…LLIRNMWRLR (517 aa). Ser22 carries the post-translational modification Phosphoserine. Residues Thr49 and Thr51 each carry the phosphothreonine modification. A disordered region spans residues 52–71; sequence AQSMQNSTQSAPNKSDAQSI. 3 positions are modified to phosphoserine: Ser54, Ser58, and Ser61. Residues 161-410 form the ABC transporter 1 domain; the sequence is LRKFQRSKET…FEDMGYVCPS (250 aa). A helical membrane pass occupies residues 518-542; sequence NNIGFTLFMILGNCSMALILGSMFF. Over 543-558 the chain is Extracellular; it reads KIMKKGDTSTFYFRGS. A helical membrane pass occupies residues 559–579; the sequence is AMFFAILFNAFSSLLEIFSLY. The Cytoplasmic portion of the chain corresponds to 580–611; sequence EARPITEKHRTYSLYHPSADAFASVLSEIPSK. The helical transmembrane segment at 612-628 threads the bilayer; the sequence is LIIAVCFNIIFYFLVDF. Topologically, residues 629-631 are extracellular; it reads RRN. A helical membrane pass occupies residues 632-650; the sequence is GGVFFFYLLINIVAVFSMS. Topologically, residues 651–665 are cytoplasmic; it reads HLFRCVGSLTKTLSE. The chain crosses the membrane as a helical span at residues 666–685; that stretch reads AMVPASMLLLALSMYTGFAI. Residues 686-774 are Extracellular-facing; that stretch reads PKKKILRWSK…QYYHKDKWRG (89 aa). Asn734 is a glycosylation site (N-linked (GlcNAc...) asparagine). A helical transmembrane segment spans residues 775–793; that stretch reads FGIGMAYVVFFFFVYLFLC. Topologically, residues 794 to 1237 are cytoplasmic; the sequence is EYNEGAKQKG…GTSLQGLQNQ (444 aa). The disordered stretch occupies residues 824-858; sequence EKNANDPENVGERSDLSSDRKMLQESSEEESDTYG. Lys825 is covalently cross-linked (Glycyl lysine isopeptide (Lys-Gly) (interchain with G-Cter in ubiquitin)). A compositionally biased stretch (basic and acidic residues) spans 833–846; sequence VGERSDLSSDRKML. Phosphoserine occurs at positions 837, 840, 841, 849, 850, and 854. The ABC transporter 2 domain maps to 869–1112; sequence FHWRNLCYEV…MIDYFESHGA (244 aa). An ATP-binding site is contributed by 905 to 912; the sequence is GASGAGKT. A helical membrane pass occupies residues 1238–1260; it reads MLAVFMFTVIFNPILQQYLPSFV. Over 1261 to 1291 the chain is Extracellular; it reads QQRDLYEARERPSRTFSWISFIFAQIFVEVP. The chain crosses the membrane as a helical span at residues 1292–1313; that stretch reads WNILAGTIAYFIYYYPIGFYSN. Over 1314–1324 the chain is Cytoplasmic; that stretch reads ASAAGQLHERG. A helical membrane pass occupies residues 1325–1349; sequence ALFWLFSCAFYVYVGSMGLLVISFN. The Extracellular segment spans residues 1350–1354; sequence QVAES. A helical transmembrane segment spans residues 1355-1379; the sequence is AANLASLLFTMSLSFCGVMTTPSAM. Residues 1380–1388 lie on the Cytoplasmic side of the membrane; the sequence is PRFWIFMYR. The helical transmembrane segment at 1389-1407 threads the bilayer; that stretch reads VSPLTYFIQALLAVGVANV. Over 1408–1476 the chain is Extracellular; that stretch reads DVKCADYELL…VNSFYSERWR (69 aa). Residue Asn1447 is glycosylated (N-linked (GlcNAc...) asparagine). The helical transmembrane segment at 1477 to 1499 threads the bilayer; sequence NYGIFICYIAFNYIAGVFFYWLA. The Cytoplasmic portion of the chain corresponds to 1500-1511; that stretch reads RVPKKNGKLSKK.

It belongs to the ABC transporter superfamily. ABCG family. PDR (TC 3.A.1.205) subfamily. Post-translationally, ubiquitinylation mediates endocytosis and vacuolar degradation. Phosphorylation by casein kinase I stabilizes the protein half-life.

The protein resides in the cell membrane. With respect to regulation, FK506, isonitrile, enniatin, RU49953, kitasatospora E420, staurosporine CGP42700, prenyl-flavonoids, D-octapeptides were found to be inhibitors in vivo. Vanadate and oligomycin were found to be inhibitors in vitro. Active efflux of weakly charged organic compounds of 90 cubic Angstroms to 300 cubic Angstroms surface volume. Confers resistance to numerous chemicals including cycloheximide, sulfomethuron methyl, steroids, antiseptics, antibiotics, anticancer, herbicides, mycotoxins, insecticides, ionophores, alkaloids, flavonoids, phenothiazines, organotin compounds, carbazoles, lysosomotropic aminoesters, detergents, rhodamines and other fluorophores, azoles and other antifungals. Exhibits nucleoside triphosphatase activity. The chain is Pleiotropic ABC efflux transporter of multiple drugs (PDR5) from Saccharomyces cerevisiae (strain ATCC 204508 / S288c) (Baker's yeast).